Reading from the N-terminus, the 467-residue chain is Sexual differentiation process putative subtilase-type proteinase isp6 (467 aa).

Residues 86–176 (YIIVLQPDLS…AVERDQVVSI (91 aa)) enclose the Inhibitor I9 domain. The region spanning 186–467 (PWGLARISHK…NLLAFNGAQE (282 aa)) is the Peptidase S8 domain. Residues Asp-221, His-253, and Ser-409 each act as charge relay system in the active site.

The protein belongs to the peptidase S8 family.

This chain is Sexual differentiation process putative subtilase-type proteinase isp6 (isp6), found in Schizosaccharomyces pombe (strain 972 / ATCC 24843) (Fission yeast).